We begin with the raw amino-acid sequence, 1601 residues long: MMTPESKAIQPAAATTKQTAEATATTTMAHTQQKSQLSTLAKTTTTTATNKAAKSVVSNANSSGNNSSKKLALSQSQKTTTTTTPPTTTTTTTAAAAAEATTNADKMQKQQQLKQQLFAACSIKVKSENTLATTANAALAAATTTTTTATPALATGKAAKTILENGIKKESTPPAVESVEASSSSSSSSSSSSSSSSSWPTTRRATSEDASSNGGASADEEKSEEDPTAAVAASSTATTTSDLATTSRPRPVLLTAVNPHIICHLCQGYLINATTIVECLHSFCHSCLINHLRKERFCPRCEMVINNAKPNIKSDTTLQAIVYKLVPGLYERELMRKRAFYKDRPEEAALATPEQRGDDTEHLIFSPSDDMSLSLEYAELGELKTDSEPELVDTLRPRYLQCPAMCRVSHLKKFVYDKFEIDAQRFSIDIMYKVKTIVLLDYYTLMDIAYIYTWKRDAPMRFYYRVYESPQPLVKPAPRRVLPLKLEKQERENQEQQLAVEVASSKVEPVSLPEDQKAEASIKVEEQESTREIVKEVIKDVAATPPTETLKLVINRNMLDKREKSHSPQMSSKSSSKSSPCTPVSSPSEPNIKLKIDLSKQNSVTIIDMSDPERREIVKPLKPEKESRSKKKDKDGSPKSSSSSSSSSSGERKRKSPSPLTVPPLTIRTERIMSPSGVSTLSPRVTSGAFSEDPKSEFLKSFALKPIKVKVESPERTLNNRAITPPSPSVQQSASPKSKGNNLDDSILMKPPSCMPPKSIASSKRKSKEPVKAVSKKQKLSPPLPTVDFKIRLPVTNGNSSGTASPKIEKPLMPPPAKPPMLAPRKLQPSAQFAPPPSPIHHHAGVQMSAPGNRTPIAKRYQPILPKASRPNPFANIPNDVNRLLKDAGTEIKSIGGGSVENNSNAAQKPHLYGPKGESKMGPPALPATTPSQGNKNVGKQAGNLPMSAPPNKGNSSNNYLNLALFNSSKCKGKEAPPGCRTPMYTPNSPIYSPSSPQYVPSYNIPTMPTYKYTPKPTPNSGSGNGGSGSYLQNMLGGGNGGSLGGLFPSPPTKSDQNTNPAQGGGGSSSATQSGGNNGIVNNNIYMPNEDAPEKQQVKVKSLLNSCNINIPSSLSITISRDNGDSSSPNNGQHPKHKSPVNNYIEIVKLPDQPQDQVQAAKEAQKRQSPPAAVPGHLAAKLPPPPPSKAIPSPQHLVSRMTPPQLPKVATPPPPSSPRVITPPKTSPPANAAKVTPLKPVLTPTQVDKKTPSPEKRTAAQMGSHSPTASENKSPKGGPAGVANSTGGAQNGDPAAKKFRPILPRQNGMPELAPKLPTLAPFVGFNPLQNPAAGKKVPPSKKSPNAGAAAHQSGQQKLVNGGQSQPAQQKTSPPAQKNQQQVKKVSKNPTPPPPSLPAVGKMMPHPVMHSQNAPLSIASSASAAAVASGQLDLSNFLKENLRRVHAAQAAQAAQVAAAANQSNMMYNLAQMGHMTPAMYNYQQAYFREQLSRMQRVGNEVFNDYLQKLKTAAATGGGGPVEGELKPMLPTVTLPSPGATPPAASPKTSPLPAGKLTAAATAPQTKGNSSSGAANARQQTAATGNNGATVPAASLPPATKSK.

2 disordered regions span residues 1–91 and 165–245; these read MMTP…TTTT and NGIK…DLAT. 2 stretches are compositionally biased toward low complexity: residues 8-91 and 182-198; these read AIQP…TTTT and SSSS…SSSS. Residues 199–215 are compositionally biased toward polar residues; it reads WPTTRRATSEDASSNGG. Residues 228 to 245 show a composition bias toward low complexity; the sequence is TAAVAASSTATTTSDLAT. The segment at 263–302 adopts an RING-type zinc-finger fold; that stretch reads CHLCQGYLINATTIVECLHSFCHSCLINHLRKERFCPRCE. 7 disordered regions span residues 561–693, 711–856, 895–960, 1011–1097, 1116–1315, 1330–1408, and 1512–1601; these read KREK…FSED, VESP…NRTP, IGGG…SNNY, YKYT…EKQQ, SITI…LAPK, NPAA…HPVM, and AATG…TKSK. Residues 567–590 show a composition bias toward low complexity; that stretch reads SPQMSSKSSSKSSPCTPVSSPSEP. Over residues 611–637 the composition is skewed to basic and acidic residues; the sequence is DPERREIVKPLKPEKESRSKKKDKDGS. Low complexity predominate over residues 638–649; sequence PKSSSSSSSSSS. Ser-656 and Ser-658 each carry phosphoserine. Residues 676–689 show a composition bias toward polar residues; that stretch reads SGVSTLSPRVTSGA. Positions 729–739 are enriched in low complexity; that stretch reads SVQQSASPKSK. Positions 812-822 are enriched in pro residues; it reads LMPPPAKPPML. Residues 929–938 show a composition bias toward polar residues; sequence TTPSQGNKNV. Over residues 1011-1022 the composition is skewed to low complexity; the sequence is YKYTPKPTPNSG. A compositionally biased stretch (gly residues) spans 1036 to 1045; that stretch reads LGGGNGGSLG. Positions 1069–1085 are enriched in low complexity; sequence SSATQSGGNNGIVNNNI. Polar residues predominate over residues 1116–1133; it reads SITISRDNGDSSSPNNGQ. Phosphoserine is present on Ser-1139. Residues 1204–1217 are compositionally biased toward pro residues; the sequence is PQLPKVATPPPPSS. Phosphothreonine is present on residues Thr-1222, Thr-1236, and Thr-1251. Over residues 1247–1258 the composition is skewed to basic and acidic residues; it reads VDKKTPSPEKRT. A phosphoserine mark is found at Ser-1253, Ser-1266, and Ser-1274. A compositionally biased stretch (polar residues) spans 1261–1272; that stretch reads QMGSHSPTASEN. 2 stretches are compositionally biased toward polar residues: residues 1352 to 1375 and 1561 to 1587; these read QSGQ…SPPA and APQT…NNGA.

Component of PRC1 complex, which contains many PcG proteins like Pc, ph, Scm, Psc, Sce and also chromatin-remodeling proteins such as histone deacetylases. This complex is distinct from the Esc/E(z) complex, at least composed of esc, E(z), Su(z)12, HDAC1/Rpd3 and Caf1-55. The 2 complexes however cooperate and interact together during the first 3 hours of development to establish PcG silencing.

The protein resides in the nucleus. Polycomb group (PcG) protein. PcG proteins act by forming multiprotein complexes, which are required to maintain the transcriptionally repressive state of homeotic genes throughout development. PcG proteins are not required to initiate repression, but to maintain it during later stages of development. Component of the PcG multiprotein PRC1 complex, a complex that acts via chromatin remodeling and modification of histones; it mediates monoubiquitination of histone H2A 'Lys-118', rendering chromatin heritably changed in its expressibility. Needed to maintain expression patterns of the homeotic selector genes of the Antennapedia (Antp-C) and Bithorax (BX-C) complexes, and hence for the maintenance of segmental determination. This chain is Polycomb group protein Psc (Psc), found in Drosophila melanogaster (Fruit fly).